A 557-amino-acid chain; its full sequence is 2-succinyl-5-enolpyruvyl-6-hydroxy-3-cyclohexene-1-carboxylate synthase (557 aa).

The protein belongs to the TPP enzyme family. MenD subfamily. In terms of assembly, homodimer. Mg(2+) is required as a cofactor. The cofactor is Mn(2+). It depends on thiamine diphosphate as a cofactor.

It carries out the reaction isochorismate + 2-oxoglutarate + H(+) = 5-enolpyruvoyl-6-hydroxy-2-succinyl-cyclohex-3-ene-1-carboxylate + CO2. It functions in the pathway quinol/quinone metabolism; 1,4-dihydroxy-2-naphthoate biosynthesis; 1,4-dihydroxy-2-naphthoate from chorismate: step 2/7. The protein operates within quinol/quinone metabolism; menaquinone biosynthesis. Functionally, catalyzes the thiamine diphosphate-dependent decarboxylation of 2-oxoglutarate and the subsequent addition of the resulting succinic semialdehyde-thiamine pyrophosphate anion to isochorismate to yield 2-succinyl-5-enolpyruvyl-6-hydroxy-3-cyclohexene-1-carboxylate (SEPHCHC). This Staphylococcus aureus (strain MSSA476) protein is 2-succinyl-5-enolpyruvyl-6-hydroxy-3-cyclohexene-1-carboxylate synthase.